The primary structure comprises 449 residues: HSPB1-associated protein 1 homolog (449 aa).

The region spanning 102-266 (WAYADYKYIA…DEARVAEALT (165 aa)) is the JmjC domain. Basic and acidic residues predominate over residues 385 to 395 (DQDKLRSDNKL). A disordered region spans residues 385–416 (DQDKLRSDNKLGQRSGQSVLQDTENPGGSGEM). Over residues 396–410 (GQRSGQSVLQDTENP) the composition is skewed to polar residues.

It is found in the cytoplasm. Its function is as follows. May play a role in cellular stress response. The chain is HSPB1-associated protein 1 homolog (hspbap1) from Danio rerio (Zebrafish).